Reading from the N-terminus, the 256-residue chain is Astacin-like metalloprotease toxin 2 (256 aa).

Residues 1 to 24 (MIPDVGFLVLLTGALFICIKAAPA) form the signal peptide. A propeptide spanning residues 25–52 (TTDVDPTFEGRIVMEGDILIREEQLTER) is cleaved from the precursor. Residues 53 to 250 (NAIALENMRW…KKINTLYNCP (198 aa)) enclose the Peptidase M12A domain. 2 disulfides stabilise this stretch: Cys94–Cys249 and Cys117–Cys136. Position 144 (His144) interacts with Zn(2+). Glu145 is a catalytic residue. Zn(2+) is bound by residues His148 and His154.

Monomer. Requires Zn(2+) as cofactor. As to expression, expressed by the venom gland.

It localises to the secreted. With respect to regulation, inhibited by 1,10-phenanthroline. In terms of biological role, zinc metalloprotease. Provoques deadhesion of endothelial cells from cell cultures, and also degradation of fibronectin, fibrinogen and gelatin in vitro. Its role in the venom is not fully understood but it might act as a spreading factor that facilitates diffusion of other venom toxins. Alternatively, it might be involved in the proteolytic processing of other venom toxins or it might play a role in extra-oral digestion of prey. This is Astacin-like metalloprotease toxin 2 from Loxosceles intermedia (Brown spider).